Consider the following 229-residue polypeptide: 2,3-bisphosphoglycerate-dependent phosphoglycerate mutase (229 aa).

Residues Arg-8 to Asn-15, Thr-21 to Gly-22, Arg-60, Glu-87 to Tyr-90, Lys-98, Arg-114 to Arg-115, and Gly-183 to Asn-184 each bind substrate. The active-site Tele-phosphohistidine intermediate is His-9. The active-site Proton donor/acceptor is Glu-87.

This sequence belongs to the phosphoglycerate mutase family. BPG-dependent PGAM subfamily. As to quaternary structure, homodimer.

It carries out the reaction (2R)-2-phosphoglycerate = (2R)-3-phosphoglycerate. Its pathway is carbohydrate degradation; glycolysis; pyruvate from D-glyceraldehyde 3-phosphate: step 3/5. Catalyzes the interconversion of 2-phosphoglycerate and 3-phosphoglycerate. This is 2,3-bisphosphoglycerate-dependent phosphoglycerate mutase from Polynucleobacter asymbioticus (strain DSM 18221 / CIP 109841 / QLW-P1DMWA-1) (Polynucleobacter necessarius subsp. asymbioticus).